We begin with the raw amino-acid sequence, 215 residues long: Somatotropin (215 aa).

The signal sequence occupies residues 1-25 (MAPGARISLLLLITFTLLGPQRSGA). H44 lines the Zn(2+) pocket. The cysteines at positions 77 and 188 are disulfide-linked. S130 is subject to Phosphoserine. E197 provides a ligand contact to Zn(2+). The cysteines at positions 205 and 213 are disulfide-linked.

The protein belongs to the somatotropin/prolactin family.

The protein resides in the secreted. In terms of biological role, plays an important role in growth control. Its major role in stimulating body growth is to stimulate the liver and other tissues to secrete IGF1. It stimulates both the differentiation and proliferation of myoblasts. It also stimulates amino acid uptake and protein synthesis in muscle and other tissues. In Trichosurus vulpecula (Brush-tailed possum), this protein is Somatotropin (GH1).